We begin with the raw amino-acid sequence, 210 residues long: NAD(P)H-quinone oxidoreductase subunit I (210 aa).

4Fe-4S ferredoxin-type domains lie at G55–V84 and R95–E124. [4Fe-4S] cluster contacts are provided by C64, C67, C70, C74, C104, C107, C110, and C114.

The protein belongs to the complex I 23 kDa subunit family. In terms of assembly, NDH-1 is composed of at least 11 different subunits. Requires [4Fe-4S] cluster as cofactor.

The protein resides in the cellular thylakoid membrane. It carries out the reaction a plastoquinone + NADH + (n+1) H(+)(in) = a plastoquinol + NAD(+) + n H(+)(out). The catalysed reaction is a plastoquinone + NADPH + (n+1) H(+)(in) = a plastoquinol + NADP(+) + n H(+)(out). In terms of biological role, NDH-1 shuttles electrons from an unknown electron donor, via FMN and iron-sulfur (Fe-S) centers, to quinones in the respiratory and/or the photosynthetic chain. The immediate electron acceptor for the enzyme in this species is believed to be plastoquinone. Couples the redox reaction to proton translocation, and thus conserves the redox energy in a proton gradient. This Synechococcus sp. (strain CC9902) protein is NAD(P)H-quinone oxidoreductase subunit I.